The primary structure comprises 271 residues: Tryptophan synthase alpha chain (271 aa).

Residues glutamate 49 and aspartate 60 each act as proton acceptor in the active site.

This sequence belongs to the TrpA family. Tetramer of two alpha and two beta chains.

The enzyme catalyses (1S,2R)-1-C-(indol-3-yl)glycerol 3-phosphate + L-serine = D-glyceraldehyde 3-phosphate + L-tryptophan + H2O. It participates in amino-acid biosynthesis; L-tryptophan biosynthesis; L-tryptophan from chorismate: step 5/5. The alpha subunit is responsible for the aldol cleavage of indoleglycerol phosphate to indole and glyceraldehyde 3-phosphate. This Azoarcus sp. (strain BH72) protein is Tryptophan synthase alpha chain.